The sequence spans 569 residues: Toxin YxiD (569 aa).

An LXG domain is found at 1–235; the sequence is MKTLDVHALH…NPQMKQADDS (235 aa). Positions 8–91 form a coiled coil; it reads ALHEGIQHTI…QHAISSVESN (84 aa). The interval 548-569 is disordered; the sequence is HQAGIHGTGSPANELFKGGKKK.

This sequence in the N-terminal section; belongs to the LXG family. As to quaternary structure, probably interacts with cognate immunity protein YxxD but not with non-cognate immunity proteins. The interaction inhibits the toxic activity of YxxD.

The protein resides in the secreted. Its function is as follows. Toxic component of one of 6 LXG toxin-immunity modules in this strain. They promote kin selection, mediate competition in biofilms, and drive spatial segregation of different strains, indicating that LXG toxins may help avoid warfare between strains in biofilms. Mediates intercellular competition during biofilm formation; disruption of the operon disadvantages the bacteria, but overexpression of the cognate immunity protein restores growth in competition with wild-type. Overexpression alone in situ causes growth arrest but not cell lysis, a large decrease in chromosomal DNA content and the production of anucleate cells. No effect is seen on rRNA. Co-overexpression with cognate immunity protein YxxD does not cause growth arrest. The toxic effect is not dependent on the epsA and tapA operons which are required for biofilm formation. In Bacillus subtilis (strain 168), this protein is Toxin YxiD (yxiD).